The following is a 137-amino-acid chain: NADPH-dependent 7-cyano-7-deazaguanine reductase (137 aa).

The Thioimide intermediate role is filled by Cys51. The active-site Proton donor is Asp58. Residues 73 to 75 (VEL) and 92 to 93 (HE) contribute to the substrate site.

Belongs to the GTP cyclohydrolase I family. QueF type 1 subfamily.

It is found in the cytoplasm. The enzyme catalyses 7-aminomethyl-7-carbaguanine + 2 NADP(+) = 7-cyano-7-deazaguanine + 2 NADPH + 3 H(+). The protein operates within tRNA modification; tRNA-queuosine biosynthesis. Functionally, catalyzes the NADPH-dependent reduction of 7-cyano-7-deazaguanine (preQ0) to 7-aminomethyl-7-deazaguanine (preQ1). The chain is NADPH-dependent 7-cyano-7-deazaguanine reductase from Gloeobacter violaceus (strain ATCC 29082 / PCC 7421).